Here is a 184-residue protein sequence, read N- to C-terminus: Putative manganese efflux pump MntP (184 aa).

6 helical membrane-spanning segments follow: residues 12–32, 39–59, 63–83, 99–119, 132–152, and 164–184; these read SIMA…MGMI, IIYI…FGML, LLSG…LLVL, FIAP…LDSF, VWMT…LGLL, and YSGA…LFPL.

This sequence belongs to the MntP (TC 9.B.29) family.

The protein localises to the cell membrane. Probably functions as a manganese efflux pump. In Bacillus pumilus (strain SAFR-032), this protein is Putative manganese efflux pump MntP.